Consider the following 114-residue polypeptide: Ig heavy chain V region GOM (114 aa).

Positions E1–V112 constitute an Ig-like domain.

The polypeptide is Ig heavy chain V region GOM (Canis lupus familiaris (Dog)).